The primary structure comprises 325 residues: NAD kinase (325 aa).

Asp-91 acts as the Proton acceptor in catalysis. NAD(+) is bound by residues 91–92 (DG), His-96, 165–166 (ND), His-176, His-193, Asp-195, and 206–211 (TAYALS).

This sequence belongs to the NAD kinase family. Requires a divalent metal cation as cofactor.

Its subcellular location is the cytoplasm. The enzyme catalyses NAD(+) + ATP = ADP + NADP(+) + H(+). Involved in the regulation of the intracellular balance of NAD and NADP, and is a key enzyme in the biosynthesis of NADP. Catalyzes specifically the phosphorylation on 2'-hydroxyl of the adenosine moiety of NAD to yield NADP. This chain is NAD kinase, found in Psychrobacter arcticus (strain DSM 17307 / VKM B-2377 / 273-4).